The following is a 112-amino-acid chain: Large ribosomal subunit protein uL1 (112 aa).

This sequence belongs to the universal ribosomal protein uL1 family.

This chain is Large ribosomal subunit protein uL1 (rpl-10a), found in Caenorhabditis remanei (Caenorhabditis vulgaris).